A 114-amino-acid polypeptide reads, in one-letter code: Nucleoid-associated protein Tlet_0999 (114 aa).

It belongs to the YbaB/EbfC family. In terms of assembly, homodimer.

Its subcellular location is the cytoplasm. It is found in the nucleoid. Functionally, binds to DNA and alters its conformation. May be involved in regulation of gene expression, nucleoid organization and DNA protection. The chain is Nucleoid-associated protein Tlet_0999 from Pseudothermotoga lettingae (strain ATCC BAA-301 / DSM 14385 / NBRC 107922 / TMO) (Thermotoga lettingae).